A 661-amino-acid polypeptide reads, in one-letter code: Sorting nexin-4 (661 aa).

Polar residues-rich tracts occupy residues Met-1 to Trp-10 and His-26 to Asn-36. Disordered regions lie at residues Met-1–Asp-49 and Thr-56–Arg-75. Acidic residues predominate over residues Ile-38–Asp-49. Residues Thr-56–Glu-70 are compositionally biased toward polar residues. The region spanning Val-77–Trp-198 is the PX domain. Residues Arg-120, Ser-122, Lys-146, and Arg-165 each coordinate a 1,2-diacyl-sn-glycero-3-phospho-(1D-myo-inositol-3-phosphate). Residues Leu-554 to Gln-572 are compositionally biased toward basic and acidic residues. Positions Leu-554–Trp-661 are disordered. A compositionally biased stretch (polar residues) spans Ala-624–Gln-640. The span at Asp-645–Trp-661 shows a compositional bias: acidic residues.

It belongs to the sorting nexin family.

It localises to the cytoplasm. It is found in the membrane. The protein localises to the vacuole membrane. Functionally, sorting nexin involved in the separation or division of vacuoles throughout the entire life cycle of the cells. Required for glucose-induced micropexophagy and ethanol-induced macropexophagy. Involved in the fusion between the pexophagosome and the vacuole. Also involved in the separation or division of vacuoles throughout the entire life cycle of the cells. The sequence is that of Sorting nexin-4 (SNX4) from Komagataella pastoris (Yeast).